The primary structure comprises 351 residues: Methylthioribose-1-phosphate isomerase (351 aa).

The Proton donor role is filled by D244.

This sequence belongs to the eIF-2B alpha/beta/delta subunits family. MtnA subfamily.

The protein resides in the cytoplasm. Its subcellular location is the nucleus. It carries out the reaction 5-(methylsulfanyl)-alpha-D-ribose 1-phosphate = 5-(methylsulfanyl)-D-ribulose 1-phosphate. It participates in amino-acid biosynthesis; L-methionine biosynthesis via salvage pathway; L-methionine from S-methyl-5-thio-alpha-D-ribose 1-phosphate: step 1/6. Its function is as follows. Catalyzes the interconversion of methylthioribose-1-phosphate (MTR-1-P) into methylthioribulose-1-phosphate (MTRu-1-P). This Anopheles gambiae (African malaria mosquito) protein is Methylthioribose-1-phosphate isomerase.